Consider the following 333-residue polypeptide: 6-phosphogluconolactonase (333 aa).

Belongs to the cycloisomerase 2 family.

It carries out the reaction 6-phospho-D-glucono-1,5-lactone + H2O = 6-phospho-D-gluconate + H(+). Its pathway is carbohydrate degradation; pentose phosphate pathway; D-ribulose 5-phosphate from D-glucose 6-phosphate (oxidative stage): step 2/3. In terms of biological role, catalyzes the hydrolysis of 6-phosphogluconolactone to 6-phosphogluconate. The sequence is that of 6-phosphogluconolactonase from Buchnera aphidicola subsp. Schizaphis graminum (strain Sg).